We begin with the raw amino-acid sequence, 384 residues long: Neuropeptide Y receptor type 2 (384 aa).

The Extracellular portion of the chain corresponds to 1-54 (MKMGPLGAEADENQTVEEMKVDQFGPGHTTLPGELAPDSEPELIDSTKLIEVQV). N13 carries an N-linked (GlcNAc...) asparagine glycan. The chain crosses the membrane as a helical span at residues 55-75 (VLILAYCSIILLGVIGNSLVI). Residues 76-89 (HVVIKFKSMRTVTN) are Cytoplasmic-facing. The chain crosses the membrane as a helical span at residues 90-110 (FFIANLAVADLLVNTLCLPFT). The Extracellular segment spans residues 111 to 127 (LTYTLMGEWKMGPVLCH). The cysteines at positions 126 and 206 are disulfide-linked. A helical transmembrane segment spans residues 128–148 (LVPYAQGLAVQVSTITLTVIA). Topologically, residues 149–168 (LDRHRCIVYHLESKISKQIS) are cytoplasmic. Residues 169 to 189 (FLIIGLAWGVSALLASPLAIF) form a helical membrane-spanning segment. Over 190-219 (REYSLIEIIPDFEIVACTEKWPGEEKGIYG) the chain is Extracellular. A helical transmembrane segment spans residues 220-240 (TIYSLSSLLILYVLPLGIISF). At 241 to 271 (SYTRIWSKLKNHVSPGAAHDHYHQRRQKTTK) the chain is on the cytoplasmic side. Residues 272–292 (MLVCVVVVFAVSWLPLHAFQL) traverse the membrane as a helical segment. At 293-307 (AVDIDSHVLDLKEYK) the chain is on the extracellular side. Residues 308 to 328 (LIFTVFHIIAMCSTFANPLLY) form a helical membrane-spanning segment. Topologically, residues 329–384 (GWMNSNYRKAFLSAFRCEQRLDAIHSEVSVTFKAKKHLQVTKNNGPNDSFTETTNV) are cytoplasmic. C345 carries S-palmitoyl cysteine lipidation.

Belongs to the G-protein coupled receptor 1 family.

The protein resides in the cell membrane. Its function is as follows. Receptor for neuropeptide Y and peptide YY. In Bos taurus (Bovine), this protein is Neuropeptide Y receptor type 2 (NPY2R).